Reading from the N-terminus, the 78-residue chain is Large ribosomal subunit protein uL29 (78 aa).

A disordered region spans residues 59 to 78 (VESERKRGKSLSSTQTQKEE). Residues 68 to 78 (SLSSTQTQKEE) show a composition bias toward polar residues.

This sequence belongs to the universal ribosomal protein uL29 family.

This chain is Large ribosomal subunit protein uL29, found in Synechococcus sp. (strain JA-3-3Ab) (Cyanobacteria bacterium Yellowstone A-Prime).